We begin with the raw amino-acid sequence, 109 residues long: T cell receptor alpha variable 27 (109 aa).

Residues Met-1–Thr-19 form the signal peptide. One can recognise an Ig-like domain in the interval Gln-20–Gly-109. Residues Asn-36 and Asn-42 are each glycosylated (N-linked (GlcNAc...) asparagine). An intrachain disulfide couples Cys-41 to Cys-107.

Alpha-beta TR is a heterodimer composed of an alpha and beta chain; disulfide-linked. The alpha-beta TR is associated with the transmembrane signaling CD3 coreceptor proteins to form the TR-CD3 (TcR or TCR). The assembly of alpha-beta TR heterodimers with CD3 occurs in the endoplasmic reticulum where a single alpha-beta TR heterodimer associates with one CD3D-CD3E heterodimer, one CD3G-CD3E heterodimer and one CD247 homodimer forming a stable octameric structure. CD3D-CD3E and CD3G-CD3E heterodimers preferentially associate with TR alpha and TR beta chains, respectively. The association of the CD247 homodimer is the last step of TcR assembly in the endoplasmic reticulum and is required for transport to the cell surface. In terms of assembly, (Microbial infection) Interacts with Staphylococcus aureus enterotoxin H/entH.

Its subcellular location is the cell membrane. Its function is as follows. V region of the variable domain of T cell receptor (TR) alpha chain that participates in the antigen recognition. Alpha-beta T cell receptors are antigen specific receptors which are essential to the immune response and are present on the cell surface of T lymphocytes. Recognize peptide-major histocompatibility (MH) (pMH) complexes that are displayed by antigen presenting cells (APC), a prerequisite for efficient T cell adaptive immunity against pathogens. Binding of alpha-beta TR to pMH complex initiates TR-CD3 clustering on the cell surface and intracellular activation of LCK that phosphorylates the ITAM motifs of CD3G, CD3D, CD3E and CD247 enabling the recruitment of ZAP70. In turn, ZAP70 phosphorylates LAT, which recruits numerous signaling molecules to form the LAT signalosome. The LAT signalosome propagates signal branching to three major signaling pathways, the calcium, the mitogen-activated protein kinase (MAPK) kinase and the nuclear factor NF-kappa-B (NF-kB) pathways, leading to the mobilization of transcription factors that are critical for gene expression and essential for T cell growth and differentiation. The T cell repertoire is generated in the thymus, by V-(D)-J rearrangement. This repertoire is then shaped by intrathymic selection events to generate a peripheral T cell pool of self-MH restricted, non-autoaggressive T cells. Post-thymic interaction of alpha-beta TR with the pMH complexes shapes TR structural and functional avidity. This Homo sapiens (Human) protein is T cell receptor alpha variable 27.